Reading from the N-terminus, the 635-residue chain is Chaperone protein HtpG (635 aa).

The interval 1–343 (MTAEATVETR…SNDLSLNVSR (343 aa)) is a; substrate-binding. The b stretch occupies residues 344–560 (EILQQDPNID…EHDMGAQMRR (217 aa)). A c region spans residues 561 to 635 (LLEAAGQAVP…LNKLLLELSN (75 aa)).

This sequence belongs to the heat shock protein 90 family. As to quaternary structure, homodimer.

Its subcellular location is the cytoplasm. Its function is as follows. Molecular chaperone. Has ATPase activity. This is Chaperone protein HtpG from Saccharophagus degradans (strain 2-40 / ATCC 43961 / DSM 17024).